The following is a 199-amino-acid chain: RNA-binding protein, mRNA-processing factor 2a (199 aa).

The RRM domain occupies 20–97; sequence RTLFVSGLPV…QTLRLEFAKA (78 aa).

Interacts with Bucky ball (BUC); to mediate Balbiani body formation and oocyte polarity during early oogenesis.

It is found in the cytoplasm. The protein localises to the nucleus. It localises to the stress granule. In terms of biological role, RNA-binding protein involved in the regulation of smooth muscle cell differentiation and proliferation in the gastrointestinal system. RNA-binding protein localized in Balbiani body (electron-dense aggregates in the oocyte) and germ plasm during oogenesis, and may be required to maintain germ plasm mRNA translational repression. Translational regulator during topographic map formation in the visual system. Establishes oocyte polarity through interaction with Bucky ball (BUC). Acts as a pre-mRNA alternative splicing regulator. Mediates ACTN1 and FLNB alternative splicing. Likely binds to mRNA tandem CAC trinucleotide or CA dinucleotide motifs. This Danio rerio (Zebrafish) protein is RNA-binding protein, mRNA-processing factor 2a.